A 293-amino-acid polypeptide reads, in one-letter code: Fructose-bisphosphate aldolase (293 aa).

Serine 50 provides a ligand contact to D-glyceraldehyde 3-phosphate. Aspartate 85 (proton donor) is an active-site residue. The Zn(2+) site is built by histidine 86, aspartate 106, glutamate 136, and histidine 178. Glycine 179 provides a ligand contact to dihydroxyacetone phosphate. Histidine 208 lines the Zn(2+) pocket. Dihydroxyacetone phosphate-binding positions include 209–211 (GGS) and 230–233 (NVNT).

It belongs to the class II fructose-bisphosphate aldolase family. Zn(2+) serves as cofactor.

The enzyme catalyses beta-D-fructose 1,6-bisphosphate = D-glyceraldehyde 3-phosphate + dihydroxyacetone phosphate. The protein operates within carbohydrate degradation; glycolysis; D-glyceraldehyde 3-phosphate and glycerone phosphate from D-glucose: step 4/4. Catalyzes the aldol condensation of dihydroxyacetone phosphate (DHAP or glycerone-phosphate) with glyceraldehyde 3-phosphate (G3P) to form fructose 1,6-bisphosphate (FBP) in gluconeogenesis and the reverse reaction in glycolysis. This chain is Fructose-bisphosphate aldolase (fba), found in Streptococcus pyogenes serotype M1.